We begin with the raw amino-acid sequence, 116 residues long: Putative pterin-4-alpha-carbinolamine dehydratase (116 aa).

Belongs to the pterin-4-alpha-carbinolamine dehydratase family.

It catalyses the reaction (4aS,6R)-4a-hydroxy-L-erythro-5,6,7,8-tetrahydrobiopterin = (6R)-L-erythro-6,7-dihydrobiopterin + H2O. The protein is Putative pterin-4-alpha-carbinolamine dehydratase of Xylella fastidiosa (strain M23).